A 352-amino-acid polypeptide reads, in one-letter code: MIEADRLIAATGPREREEIQDRAIRPVSLADYIGQPSVREQMELFIQAARGRNESLDHTLIFGPPGLGKTTLANIIAEEMGVSIKSTSGPVLERPGDLAALLTNLEPHDVLFIDEIHRLSPIVEEVLYPAMEDFQLDIMIGEGPAARSIKLDLPPFTLVGATTRAGMLTNPLRDRFGIVQRLEFYSTADLATIVSRSAGILGLPLDPEGAFEVARRARGTPRIANRLLRRVRDFAEVRAKGHITKPIADLALNLLDVDERGFDHQDRRLLLTMIEKFDGGPVGVDSLAAAISEERHTIEDVLEPYLIQQGYIMRTPRGRVVTRHAYLHFGLNIPSRMGDMPVVDEFLDAVDD.

The segment at 4 to 185 is large ATPase domain (RuvB-L); sequence ADRLIAATGP…FGIVQRLEFY (182 aa). ATP-binding positions include Ile-24, Arg-25, Gly-66, Lys-69, Thr-70, Thr-71, 132–134, Arg-175, Tyr-185, and Arg-222; that span reads EDF. Thr-70 contacts Mg(2+). Residues 186-256 are small ATPAse domain (RuvB-S); sequence STADLATIVS…IADLALNLLD (71 aa). The tract at residues 259–352 is head domain (RuvB-H); sequence ERGFDHQDRR…VDEFLDAVDD (94 aa). Arg-295, Arg-314, and Arg-319 together coordinate DNA.

This sequence belongs to the RuvB family. In terms of assembly, homohexamer. Forms an RuvA(8)-RuvB(12)-Holliday junction (HJ) complex. HJ DNA is sandwiched between 2 RuvA tetramers; dsDNA enters through RuvA and exits via RuvB. An RuvB hexamer assembles on each DNA strand where it exits the tetramer. Each RuvB hexamer is contacted by two RuvA subunits (via domain III) on 2 adjacent RuvB subunits; this complex drives branch migration. In the full resolvosome a probable DNA-RuvA(4)-RuvB(12)-RuvC(2) complex forms which resolves the HJ.

It localises to the cytoplasm. The enzyme catalyses ATP + H2O = ADP + phosphate + H(+). The RuvA-RuvB-RuvC complex processes Holliday junction (HJ) DNA during genetic recombination and DNA repair, while the RuvA-RuvB complex plays an important role in the rescue of blocked DNA replication forks via replication fork reversal (RFR). RuvA specifically binds to HJ cruciform DNA, conferring on it an open structure. The RuvB hexamer acts as an ATP-dependent pump, pulling dsDNA into and through the RuvAB complex. RuvB forms 2 homohexamers on either side of HJ DNA bound by 1 or 2 RuvA tetramers; 4 subunits per hexamer contact DNA at a time. Coordinated motions by a converter formed by DNA-disengaged RuvB subunits stimulates ATP hydrolysis and nucleotide exchange. Immobilization of the converter enables RuvB to convert the ATP-contained energy into a lever motion, pulling 2 nucleotides of DNA out of the RuvA tetramer per ATP hydrolyzed, thus driving DNA branch migration. The RuvB motors rotate together with the DNA substrate, which together with the progressing nucleotide cycle form the mechanistic basis for DNA recombination by continuous HJ branch migration. Branch migration allows RuvC to scan DNA until it finds its consensus sequence, where it cleaves and resolves cruciform DNA. The polypeptide is Holliday junction branch migration complex subunit RuvB (Pseudomonas fluorescens (strain ATCC BAA-477 / NRRL B-23932 / Pf-5)).